The sequence spans 156 residues: Mitochondrial intermembrane space cysteine motif-containing protein MIX17 (156 aa).

A mitochondrion-targeting transit peptide spans 1 to 21 (MARSRGSSRPISRSRPTQTRS). Residues 1-21 (MARSRGSSRPISRSRPTQTRS) are compositionally biased toward low complexity. Disordered stretches follow at residues 1 to 50 (MARS…GAQT) and 78 to 110 (AGITGMFSGSGSDSAPVEQQQQNMANTSGQTQT). Residues 84–110 (FSGSGSDSAPVEQQQQNMANTSGQTQT) show a composition bias toward polar residues. One can recognise a CHCH domain in the interval 115–156 (GRTCEIDARNFTRCLDENNGNFQICDYYLQQLKACQEAARQY). The Cx9C motif motif lies at 118–128 (CEIDARNFTRC). 2 disulfide bridges follow: cysteine 118-cysteine 149 and cysteine 128-cysteine 139.

It is found in the mitochondrion intermembrane space. The polypeptide is Mitochondrial intermembrane space cysteine motif-containing protein MIX17 (MIX17) (Saccharomyces cerevisiae (strain ATCC 204508 / S288c) (Baker's yeast)).